A 553-amino-acid chain; its full sequence is ATP synthase F(1) complex subunit alpha, mitochondrial (553 aa).

Residues 1-43 (MLSVRVAAAVARALPRRAGLVSKNALGSSFVAARNLHASNTRL) constitute a mitochondrion transit peptide. Phosphoserine is present on residues Ser-53 and Ser-65. Residue Ser-76 is modified to Phosphoserine; alternate. A glycan (O-linked (GlcNAc) serine; alternate) is linked at Ser-76. Position 106 is a phosphoserine (Ser-106). N6-acetyllysine is present on residues Lys-123, Lys-126, and Lys-132. The residue at position 134 (Thr-134) is a Phosphothreonine. Lys-161 is modified (N6-acetyllysine; alternate). Lys-161 carries the N6-succinyllysine; alternate modification. Position 166 is a phosphoserine (Ser-166). An N6-acetyllysine; alternate modification is found at Lys-167. Position 167 is an N6-succinyllysine; alternate (Lys-167). Ser-184 bears the Phosphoserine mark. Position 204 is an omega-N-methylarginine (Arg-204). Gln-215, Gly-217, Lys-218, Thr-219, and Ser-220 together coordinate ATP. Thr-219 contacts Mg(2+). 2 positions are modified to N6-acetyllysine; alternate: Lys-230 and Lys-239. An N6-succinyllysine; alternate mark is found at Lys-230 and Lys-239. Lys-240 carries the N6-acetyllysine modification. Residues Lys-261 and Lys-305 each carry the N6-acetyllysine; alternate modification. 2 positions are modified to N6-succinyllysine; alternate: Lys-261 and Lys-305. Asp-312 is a binding site for Mg(2+). Lys-427 carries the post-translational modification N6-acetyllysine; alternate. Lys-427 carries the post-translational modification N6-succinyllysine; alternate. Lys-434 is subject to N6-acetyllysine. ATP is bound by residues Gln-473 and Gln-475. 4 positions are modified to N6-acetyllysine; alternate: Lys-498, Lys-506, Lys-531, and Lys-539. Residues Lys-498, Lys-506, Lys-531, and Lys-539 each carry the N6-succinyllysine; alternate modification. N6-acetyllysine is present on Lys-541.

This sequence belongs to the ATPase alpha/beta chains family. In terms of assembly, homotrimer. Component of the ATP synthase complex composed at least of ATP5F1A/subunit alpha, ATP5F1B/subunit beta, ATP5MC1/subunit c (homooctomer), MT-ATP6/subunit a, MT-ATP8/subunit 8, ATP5ME/subunit e, ATP5MF/subunit f, ATP5MG/subunit g, ATP5MK/subunit k, ATP5MJ/subunit j, ATP5F1C/subunit gamma, ATP5F1D/subunit delta, ATP5F1E/subunit epsilon, ATP5PF/subunit F6, ATP5PB/subunit b, ATP5PD/subunit d, ATP5PO/subunit OSCP. ATP synthase complex consists of a soluble F(1) head domain (subunits alpha(3) and beta(3)) - the catalytic core - and a membrane F(0) domain - the membrane proton channel (subunits c, a, 8, e, f, g, k and j). These two domains are linked by a central stalk (subunits gamma, delta, and epsilon) rotating inside the F1 region and a stationary peripheral stalk (subunits F6, b, d, and OSCP). Interacts with ATPAF2. Interacts with HRG; the interaction occurs on the surface of T-cells and alters the cell morphology when associated with concanavalin (in vitro). Interacts with PLG (angiostatin peptide); the interaction inhibits most of the angiogenic properties of angiostatin. Interacts with BLOC1S1. Interacts with BCL2L1 isoform BCL-X(L); the interaction mediates the association of BCL2L1 isoform BCL-X(L) with the mitochondrial membrane F(1)F(0) ATP synthase and enhances neurons metabolic efficiency. Interacts with CLN5 and PPT1. Interacts with S100A1; this interaction increases F1-ATPase activity. Interacts with ABCB7; this interaction allows the regulation of cellular iron homeostasis and cellular reactive oxygen species (ROS) levels in cardiomyocytes. In terms of processing, acetylated on lysine residues. BLOC1S1 is required for acetylation. In terms of tissue distribution, expressed in heart (at protein level).

The protein localises to the mitochondrion. It localises to the mitochondrion inner membrane. It is found in the cell membrane. Subunit alpha, of the mitochondrial membrane ATP synthase complex (F(1)F(0) ATP synthase or Complex V) that produces ATP from ADP in the presence of a proton gradient across the membrane which is generated by electron transport complexes of the respiratory chain. ATP synthase complex consist of a soluble F(1) head domain - the catalytic core - and a membrane F(1) domain - the membrane proton channel. These two domains are linked by a central stalk rotating inside the F(1) region and a stationary peripheral stalk. During catalysis, ATP synthesis in the catalytic domain of F(1) is coupled via a rotary mechanism of the central stalk subunits to proton translocation. In vivo, can only synthesize ATP although its ATP hydrolase activity can be activated artificially in vitro. With the catalytic subunit beta (ATP5F1B), forms the catalytic core in the F(1) domain. Subunit alpha does not bear the catalytic high-affinity ATP-binding sites. The sequence is that of ATP synthase F(1) complex subunit alpha, mitochondrial from Sus scrofa (Pig).